We begin with the raw amino-acid sequence, 341 residues long: D-erythrose-4-phosphate dehydrogenase (341 aa).

12-13 (RI) provides a ligand contact to NAD(+). Substrate-binding positions include 154–156 (SCT), Arg200, 213–214 (TK), and Arg236. The Nucleophile role is filled by Cys155. Asn318 provides a ligand contact to NAD(+).

The protein belongs to the glyceraldehyde-3-phosphate dehydrogenase family. Epd subfamily. As to quaternary structure, homotetramer.

It is found in the cytoplasm. The catalysed reaction is D-erythrose 4-phosphate + NAD(+) + H2O = 4-phospho-D-erythronate + NADH + 2 H(+). It functions in the pathway cofactor biosynthesis; pyridoxine 5'-phosphate biosynthesis; pyridoxine 5'-phosphate from D-erythrose 4-phosphate: step 1/5. Its function is as follows. Catalyzes the NAD-dependent conversion of D-erythrose 4-phosphate to 4-phosphoerythronate. The chain is D-erythrose-4-phosphate dehydrogenase from Edwardsiella ictaluri (strain 93-146).